The chain runs to 189 residues: Parkinson disease protein 7 homolog (189 aa).

Ala2 is modified (N-acetylalanine). 2 S-palmitoyl cysteine lipidation sites follow: Cys46 and Cys53. Tyr67 bears the Phosphotyrosine mark. Cys106 acts as the Nucleophile in catalysis. Cys106 carries the post-translational modification Cysteine sulfinic acid (-SO2H); alternate. The S-palmitoyl cysteine; alternate moiety is linked to residue Cys106. His126 is an active-site residue. A Glycyl lysine isopeptide (Lys-Gly) (interchain with G-Cter in SUMO) cross-link involves residue Lys130. N6-acetyllysine is present on Lys148. N6-succinyllysine is present on Lys182.

Belongs to the peptidase C56 family. As to quaternary structure, homodimer. Binds EFCAB6/DJBP and PIAS2. Part of a ternary complex containing PARK7, EFCAB6/DJBP and AR. Binds to HIPK1. Interacts (via N-terminus) with OTUD7B. Interacts with BBS1, CLCF1 and MTERF. Interacts (via C-terminus) with NCF1; the interaction is enhanced by LPS and modulates NCF1 phosphorylation and membrane translocation. Interacts with NENF. Deglycase activity does not require glutathione as a cofactor, however, glycated glutathione constitutes a PARK7 substrate. serves as cofactor. Post-translationally, sumoylated on Lys-130 by PIAS2 or PIAS4; which is essential for cell-growth promoting activity and transforming activity. In terms of processing, undergoes cleavage of a C-terminal peptide and subsequent activation of protease activity in response to oxidative stress. Expressed in erythroblasts and in mature red blood cells from peripheral blood (at protein level). In pancreas, expression is higher in islets than surrounding exocrine tissues.

It is found in the cell membrane. The protein resides in the cytoplasm. The protein localises to the membrane raft. It localises to the nucleus. Its subcellular location is the mitochondrion. It is found in the endoplasmic reticulum. The catalysed reaction is N(omega)-(1-hydroxy-2-oxopropyl)-L-arginyl-[protein] + H2O = lactate + L-arginyl-[protein] + H(+). The enzyme catalyses N(6)-(1-hydroxy-2-oxopropyl)-L-lysyl-[protein] + H2O = lactate + L-lysyl-[protein] + H(+). It carries out the reaction S-(1-hydroxy-2-oxopropyl)-L-cysteinyl-[protein] + H2O = lactate + L-cysteinyl-[protein] + H(+). It catalyses the reaction N(omega)-(1-hydroxy-2-oxoethyl)-L-arginyl-[protein] + H2O = L-arginyl-[protein] + glycolate + H(+). The catalysed reaction is N(6)-(1-hydroxy-2-oxoethyl)-L-lysyl-[protein] + H2O = glycolate + L-lysyl-[protein] + H(+). The enzyme catalyses S-(1-hydroxy-2-oxoethyl)-L-cysteinyl-[protein] + H2O = glycolate + L-cysteinyl-[protein] + H(+). It carries out the reaction N(2)-(1-hydroxy-2-oxopropyl)-dGTP + H2O = lactate + dGTP + H(+). It catalyses the reaction N(2)-(1-hydroxy-2-oxopropyl)-GTP + H2O = lactate + GTP + H(+). The catalysed reaction is N(2)-(1-hydroxy-2-oxopropyl)-GDP + H2O = lactate + GDP + H(+). The enzyme catalyses N(2)-(1-hydroxy-2-oxopropyl)-GMP + H2O = lactate + GMP + H(+). It carries out the reaction N(2)-(1-hydroxy-2-oxoethyl)-dGTP + H2O = dGTP + glycolate + H(+). It catalyses the reaction N(2)-(1-hydroxy-2-oxoethyl)-GTP + H2O = glycolate + GTP + H(+). The catalysed reaction is N(2)-(1-hydroxy-2-oxoethyl)-GDP + H2O = glycolate + GDP + H(+). The enzyme catalyses N(2)-(1-hydroxy-2-oxoethyl)-GMP + H2O = glycolate + GMP + H(+). It carries out the reaction an N(2)-(1-hydroxy-2-oxopropyl)-guanosine in RNA + H2O = a guanosine in RNA + lactate + H(+). It catalyses the reaction an N(2)-(1-hydroxy-2-oxopropyl)-2'-deoxyguanosine in DNA + H2O = a 2'-deoxyguanosine in DNA + lactate + H(+). The catalysed reaction is an N(2)-(1-hydroxy-2-oxoethyl)-guanosine in RNA + H2O = a guanosine in RNA + glycolate + H(+). The enzyme catalyses an N(2)-(1-hydroxy-2-oxoethyl)-2'-deoxyguanosine in DNA + H2O = a 2'-deoxyguanosine in DNA + glycolate + H(+). In terms of biological role, multifunctional protein with controversial molecular function which plays an important role in cell protection against oxidative stress and cell death acting as oxidative stress sensor and redox-sensitive chaperone and protease. It is involved in neuroprotective mechanisms like the stabilization of NFE2L2 and PINK1 proteins, male fertility as a positive regulator of androgen signaling pathway as well as cell growth and transformation through, for instance, the modulation of NF-kappa-B signaling pathway. Has been described as a protein and nucleotide deglycase that catalyzes the deglycation of the Maillard adducts formed between amino groups of proteins or nucleotides and reactive carbonyl groups of glyoxals. But this function is rebuted by other works. As a protein deglycase, repairs methylglyoxal- and glyoxal-glycated proteins, and releases repaired proteins and lactate or glycolate, respectively. Deglycates cysteine, arginine and lysine residues in proteins, and thus reactivates these proteins by reversing glycation by glyoxals. Acts on early glycation intermediates (hemithioacetals and aminocarbinols), preventing the formation of advanced glycation endproducts (AGE) that cause irreversible damage. Also functions as a nucleotide deglycase able to repair glycated guanine in the free nucleotide pool (GTP, GDP, GMP, dGTP) and in DNA and RNA. Is thus involved in a major nucleotide repair system named guanine glycation repair (GG repair), dedicated to reversing methylglyoxal and glyoxal damage via nucleotide sanitization and direct nucleic acid repair. Protects histones from adduction by methylglyoxal, controls the levels of methylglyoxal-derived argininine modifications on chromatin. Able to remove the glycations and restore histone 3, histone glycation disrupts both local and global chromatin architecture by altering histone-DNA interactions as well as histone acetylation and ubiquitination levels. Displays a very low glyoxalase activity that may reflect its deglycase activity. Eliminates hydrogen peroxide and protects cells against hydrogen peroxide-induced cell death. Required for correct mitochondrial morphology and function as well as for autophagy of dysfunctional mitochondria. Plays a role in regulating expression or stability of the mitochondrial uncoupling proteins SLC25A14 and SLC25A27 in dopaminergic neurons of the substantia nigra pars compacta and attenuates the oxidative stress induced by calcium entry into the neurons via L-type channels during pacemaking. Regulates astrocyte inflammatory responses, may modulate lipid rafts-dependent endocytosis in astrocytes and neuronal cells. In pancreatic islets, involved in the maintenance of mitochondrial reactive oxygen species (ROS) levels and glucose homeostasis in an age- and diet dependent manner. Protects pancreatic beta cells from cell death induced by inflammatory and cytotoxic setting. Binds to a number of mRNAs containing multiple copies of GG or CC motifs and partially inhibits their translation but dissociates following oxidative stress. Metal-binding protein able to bind copper as well as toxic mercury ions, enhances the cell protection mechanism against induced metal toxicity. In macrophages, interacts with the NADPH oxidase subunit NCF1 to direct NADPH oxidase-dependent ROS production, and protects against sepsis. The protein is Parkinson disease protein 7 homolog of Mus musculus (Mouse).